A 513-amino-acid polypeptide reads, in one-letter code: 2-isopropylmalate synthase (513 aa).

The Pyruvate carboxyltransferase domain maps to 5-268 (LIIFDTTLRD…DVGIDTTQIV (264 aa)). Mn(2+)-binding residues include Asp-14, His-202, His-204, and Asn-239. The regulatory domain stretch occupies residues 394–513 (RFISLSQRSE…KAVQKINPQI (120 aa)).

The protein belongs to the alpha-IPM synthase/homocitrate synthase family. LeuA type 1 subfamily. As to quaternary structure, homodimer. Requires Mn(2+) as cofactor.

The protein localises to the cytoplasm. It carries out the reaction 3-methyl-2-oxobutanoate + acetyl-CoA + H2O = (2S)-2-isopropylmalate + CoA + H(+). Its pathway is amino-acid biosynthesis; L-leucine biosynthesis; L-leucine from 3-methyl-2-oxobutanoate: step 1/4. Its function is as follows. Catalyzes the condensation of the acetyl group of acetyl-CoA with 3-methyl-2-oxobutanoate (2-ketoisovalerate) to form 3-carboxy-3-hydroxy-4-methylpentanoate (2-isopropylmalate). The sequence is that of 2-isopropylmalate synthase from Cupriavidus metallidurans (strain ATCC 43123 / DSM 2839 / NBRC 102507 / CH34) (Ralstonia metallidurans).